Consider the following 160-residue polypeptide: Serine-protein kinase RsbW (160 aa).

It belongs to the anti-sigma-factor family.

It catalyses the reaction L-seryl-[protein] + ATP = O-phospho-L-seryl-[protein] + ADP + H(+). The catalysed reaction is L-threonyl-[protein] + ATP = O-phospho-L-threonyl-[protein] + ADP + H(+). Functionally, negative regulator of sigma-B activity. Phosphorylates and inactivates its specific antagonist protein, RsbV. Upon phosphorylation of RsbV, RsbW is released and binds to sigma-B, thereby blocking its ability to form an RNA polymerase holoenzyme (E-sigma-B). This is Serine-protein kinase RsbW from Bacillus cereus (strain ATCC 10987 / NRS 248).